The chain runs to 54 residues: Large ribosomal subunit protein bL33 (54 aa).

This sequence belongs to the bacterial ribosomal protein bL33 family.

The polypeptide is Large ribosomal subunit protein bL33 (Rhodopirellula baltica (strain DSM 10527 / NCIMB 13988 / SH1)).